A 178-amino-acid polypeptide reads, in one-letter code: Large ribosomal subunit protein uL6 (178 aa).

Belongs to the universal ribosomal protein uL6 family. As to quaternary structure, part of the 50S ribosomal subunit.

This protein binds to the 23S rRNA, and is important in its secondary structure. It is located near the subunit interface in the base of the L7/L12 stalk, and near the tRNA binding site of the peptidyltransferase center. This is Large ribosomal subunit protein uL6 from Clavibacter sepedonicus (Clavibacter michiganensis subsp. sepedonicus).